The following is a 98-amino-acid chain: Aspartyl/glutamyl-tRNA(Asn/Gln) amidotransferase subunit C (98 aa).

Residues 76 to 98 (QVLSGAPDAEDGRFKVPAILEED) are disordered.

The protein belongs to the GatC family. In terms of assembly, heterotrimer of A, B and C subunits.

The enzyme catalyses L-glutamyl-tRNA(Gln) + L-glutamine + ATP + H2O = L-glutaminyl-tRNA(Gln) + L-glutamate + ADP + phosphate + H(+). The catalysed reaction is L-aspartyl-tRNA(Asn) + L-glutamine + ATP + H2O = L-asparaginyl-tRNA(Asn) + L-glutamate + ADP + phosphate + 2 H(+). In terms of biological role, allows the formation of correctly charged Asn-tRNA(Asn) or Gln-tRNA(Gln) through the transamidation of misacylated Asp-tRNA(Asn) or Glu-tRNA(Gln) in organisms which lack either or both of asparaginyl-tRNA or glutaminyl-tRNA synthetases. The reaction takes place in the presence of glutamine and ATP through an activated phospho-Asp-tRNA(Asn) or phospho-Glu-tRNA(Gln). The polypeptide is Aspartyl/glutamyl-tRNA(Asn/Gln) amidotransferase subunit C (Renibacterium salmoninarum (strain ATCC 33209 / DSM 20767 / JCM 11484 / NBRC 15589 / NCIMB 2235)).